Here is a 582-residue protein sequence, read N- to C-terminus: MVIPRYHLIPTNCILSYHIKMSYLTDILKLFSLETLDTRLYPSSNTAKKQSIIKQANPKSRWSTIEFKFYYLVFLIIVPLMFKAGMESANENNPNYPKYEHLLSNGWIFGRKVDNSDQQYRFFRNNFPLLCLLIIIHVGLRRVINRIIPLSSKRTYFDFIFGIIFLIGAHGVNVLKLSIHLLINYLIGKYIKNYKLSLWITWIYGISSLFFNEWYGNYTLGLSFLSTGYTGIIPRWDVFYNFTLLRMISFNFDYLERQQKLNNMTLPKEESNGSLLNLDDRERLTAPLPIEDYNIFNYISYLTYTPLFIAGPILTFNDYIYQSNYQQSSSTKDYHRIMMYLIRFIFCLLTLEFILHFMYVVAASKTKSWEGNLPFQISMLGMFNLNIIWLKLLIPWRLFRLWSLLDGIDPPENMIRCMDNNFSALAFWRAWHRSYNRWIIRYIYLPMGGGGKYRILNSLLVFSFVAIWHDIELKLLMWGWLVVLFLIPEISVTMIFKKYRNQWWYRHLCGVGAVINIWMMMIANLVGFCLGTDGMWKLLHDLFKTFDGVRFLIISSGALFVGAQIMFEIRESEMRKGINVRC.

The Extracellular segment spans residues 1-61; that stretch reads MVIPRYHLIP…IIKQANPKSR (61 aa). Residues 62-82 traverse the membrane as a helical segment; the sequence is WSTIEFKFYYLVFLIIVPLMF. Residues 83–121 lie on the Cytoplasmic side of the membrane; sequence KAGMESANENNPNYPKYEHLLSNGWIFGRKVDNSDQQYR. A helical membrane pass occupies residues 122–144; sequence FFRNNFPLLCLLIIIHVGLRRVI. Residues 145-158 lie on the Extracellular side of the membrane; sequence NRIIPLSSKRTYFD. The helical transmembrane segment at 159-179 threads the bilayer; it reads FIFGIIFLIGAHGVNVLKLSI. Topologically, residues 180 to 195 are cytoplasmic; the sequence is HLLINYLIGKYIKNYK. Residues 196–216 form a helical membrane-spanning segment; that stretch reads LSLWITWIYGISSLFFNEWYG. At 217-294 the chain is on the extracellular side; that stretch reads NYTLGLSFLS…TAPLPIEDYN (78 aa). Residues 295–315 form a helical membrane-spanning segment; it reads IFNYISYLTYTPLFIAGPILT. Topologically, residues 316–343 are cytoplasmic; that stretch reads FNDYIYQSNYQQSSSTKDYHRIMMYLIR. A helical membrane pass occupies residues 344–364; sequence FIFCLLTLEFILHFMYVVAAS. Residues 365–373 lie on the Extracellular side of the membrane; it reads KTKSWEGNL. A helical membrane pass occupies residues 374–394; that stretch reads PFQISMLGMFNLNIIWLKLLI. The Cytoplasmic portion of the chain corresponds to 395-454; it reads PWRLFRLWSLLDGIDPPENMIRCMDNNFSALAFWRAWHRSYNRWIIRYIYLPMGGGGKYR. 2 helical membrane passes run 455–475 and 476–496; these read ILNS…ELKL and LMWG…TMIF. H469 is an active-site residue. The Cytoplasmic portion of the chain corresponds to 497–507; it reads KKYRNQWWYRH. A helical membrane pass occupies residues 508–528; the sequence is LCGVGAVINIWMMMIANLVGF. At 529-548 the chain is on the extracellular side; it reads CLGTDGMWKLLHDLFKTFDG. Residues 549–569 form a helical membrane-spanning segment; it reads VRFLIISSGALFVGAQIMFEI. At 570–582 the chain is on the cytoplasmic side; that stretch reads RESEMRKGINVRC.

It belongs to the membrane-bound acyltransferase family.

Its subcellular location is the cell membrane. The protein resides in the endoplasmic reticulum membrane. It is found in the mitochondrion membrane. Membrane-bound O-acyltransferase involved in the remodeling of glycosylphosphatidylinositol (GPI) anchors. Acts only on GPI-anchored proteins, but not on free GPI lipids. Also involved in lipid metabolism, having profound effects on sphingolipid-sterol-ordered domains integrity and assembly. Involved in cell integrity and apoptosis. This Candida tropicalis (Yeast) protein is Membrane-bound O-acyltransferase GUP1 (GUP1).